A 379-amino-acid polypeptide reads, in one-letter code: MRVKDAVELASYAVSEAVSRGRVHPEAAPRERGEFQRDRDRIVHSTAFRRLEYKTQVFVNHEGDLFRTRLTHTIEVAQLTRSLARALGLNEDLAEAIALAHDLGHTPFGHAGQDALHACMKDYGGFEHNLQSLRTVELLEDRYAAFDGLNLLFETREGILKHCSRPNAEKLGELGARFLNGTQPSLEAQLANLADEIAYSNHDVDDGLRSGLITLEQLDSIDVFAEHRRAVQSRWPGLAGRKLISETVRSMVNAMALDLIAQTRANIADAGVRTVDDVRAGPRLVAYSSSLQPRLRALKGFLRENLYWHYQVLRMTDKARRIIGDLFGAFMADPRLLPPQYQEKARTDKPRAIADYIAGMTDRYAMKEHRRLFAVGEIH.

The region spanning 69–200 (RLTHTIEVAQ…ANLADEIAYS (132 aa)) is the HD domain.

It belongs to the dGTPase family. Type 2 subfamily.

The sequence is that of Deoxyguanosinetriphosphate triphosphohydrolase-like protein from Azoarcus sp. (strain BH72).